A 602-amino-acid chain; its full sequence is Probable pectinesterase/pectinesterase inhibitor 64 (602 aa).

A helical membrane pass occupies residues 36-56 (ILIIIAASCILLLLISLLIYA). The disordered stretch occupies residues 62 to 91 (SRNHHNPSHQTPTSDDHPPPETPPSPPPIA). Pro residues predominate over residues 81-90 (PETPPSPPPI). Residues 87 to 237 (PPPIAQIRLA…VNLTGNALSM (151 aa)) form a pectinesterase inhibitor 64 region. Residues Asn-98, Asn-156, Asn-212, Asn-229, and Asn-315 are each glycosylated (N-linked (GlcNAc...) asparagine). The tract at residues 288 to 595 (DVTVCKNGGK…YSVANFIQAD (308 aa)) is pectinesterase 64. The substrate site is built by Thr-367 and Gln-397. The active-site Proton donor; for pectinesterase activity is the Asp-420. Cys-434 and Cys-454 are disulfide-bonded. The Nucleophile; for pectinesterase activity role is filled by Asp-441. Asn-492 and Asn-496 each carry an N-linked (GlcNAc...) asparagine glycan. Positions 518 and 520 each coordinate substrate.

It in the N-terminal section; belongs to the PMEI family. The protein in the C-terminal section; belongs to the pectinesterase family. As to expression, expressed in siliques.

It is found in the membrane. The catalysed reaction is [(1-&gt;4)-alpha-D-galacturonosyl methyl ester](n) + n H2O = [(1-&gt;4)-alpha-D-galacturonosyl](n) + n methanol + n H(+). The protein operates within glycan metabolism; pectin degradation; 2-dehydro-3-deoxy-D-gluconate from pectin: step 1/5. Functionally, acts in the modification of cell walls via demethylesterification of cell wall pectin. This chain is Probable pectinesterase/pectinesterase inhibitor 64 (PME64), found in Arabidopsis thaliana (Mouse-ear cress).